Reading from the N-terminus, the 237-residue chain is 2,3-bisphosphoglycerate-dependent phosphoglycerate mutase (237 aa).

Substrate contacts are provided by residues 8–15 (RHGQSQWN), 21–22 (TG), Arg60, 87–90 (ERHY), Lys98, 114–115 (RR), and 180–181 (GN). His9 functions as the Tele-phosphohistidine intermediate in the catalytic mechanism. Glu87 functions as the Proton donor/acceptor in the catalytic mechanism.

Belongs to the phosphoglycerate mutase family. BPG-dependent PGAM subfamily. Homodimer.

The catalysed reaction is (2R)-2-phosphoglycerate = (2R)-3-phosphoglycerate. It functions in the pathway carbohydrate degradation; glycolysis; pyruvate from D-glyceraldehyde 3-phosphate: step 3/5. In terms of biological role, catalyzes the interconversion of 2-phosphoglycerate and 3-phosphoglycerate. This Caulobacter vibrioides (strain ATCC 19089 / CIP 103742 / CB 15) (Caulobacter crescentus) protein is 2,3-bisphosphoglycerate-dependent phosphoglycerate mutase.